Consider the following 142-residue polypeptide: Transcriptional regulator MraZ (142 aa).

SpoVT-AbrB domains lie at E5–E47 and A76–K119.

It belongs to the MraZ family. Forms oligomers.

It is found in the cytoplasm. The protein localises to the nucleoid. The sequence is that of Transcriptional regulator MraZ from Clostridium acetobutylicum (strain ATCC 824 / DSM 792 / JCM 1419 / IAM 19013 / LMG 5710 / NBRC 13948 / NRRL B-527 / VKM B-1787 / 2291 / W).